A 578-amino-acid polypeptide reads, in one-letter code: Probable arginine--tRNA ligase, mitochondrial (578 aa).

The transit peptide at 1 to 16 (MACGFRRAIACQLSRV) directs the protein to the mitochondrion. L-arginine is bound by residues 133-135 (SPN), His144, Tyr322, Asp326, and Gln350. The 'HIGH' region motif lies at 133–144 (SPNVAKKFHVGH). Residue Lys568 is modified to N6-acetyllysine.

It belongs to the class-I aminoacyl-tRNA synthetase family.

It is found in the mitochondrion membrane. It catalyses the reaction tRNA(Arg) + L-arginine + ATP = L-arginyl-tRNA(Arg) + AMP + diphosphate. Functionally, catalyzes the attachment of arginine to tRNA(Arg) in a two-step reaction: arginine is first activated by ATP to form Arg-AMP and then transferred to the acceptor end of tRNA(Arg). The sequence is that of Probable arginine--tRNA ligase, mitochondrial (RARS2) from Pongo abelii (Sumatran orangutan).